The primary structure comprises 904 residues: MNEYRSSLVFATPDVPLRDDVRRLGALVGDLLAEQVSADFLEEIERIRTTAIARRESDTPPAGLLSLLEGREPRAAEALVRAFSTYFQVVNIAERVHRIRRRRDYQRSGTDTPQPEGLHDALRRLKAQGVTLDELSEWLPRIDVEPVFTAHPTEAVRRALLEKEQLMVASLVDNLDGMRTPNERATDAARFRMALTASWQTADSSPVRPTVEDEREHVGFYLTQVLYRVIPVMYETLEHAIEETYGSTLALPRLLRFGTWVGGDMDGNPNVDAHTIAGTLDAQRRAVLDRYLNELWQLASLLSQSTTLVAVSPALSAQLERYQALLPDAAARSRPRHGDMPYRLLNDLMRARLQATLDDADGAYAAPAELEHDLQLILDSLEVNKGLHAGWFAVRRLLWRVRSFGFHLARLDVRQESSVHARAVADALGQADWDSQDATHRAGLLGPYASGEQALPQVDDEGNARLDAVFAALADARTRHGADALGSYIISMAHNRADVLTVLALARRGGLVDDAGAVPLDIVPLFETVDDLRGGTGTVQDLLADPVYRQHLRARGDTQMVMLGYSDSGKDGGIAASRWGLQRAQVELLEAAAELGVRLTFFHGRGGSIVRGGGKTTRALDAAPRGSVDGRLRVTEQGEVIHRKYGIRALALRSLEQMTGAVLLSSLRPRAPEPREDAWRPVMDLVAERSTVAYRGFVGAPDFMQYFRLATPIDVIERMTLGSRPSRRLGQDAALSNLRAIPWVFAWSQARAVIPGWYGVGSGLQAAVEAGHEDSLREMAQDWPFFRTFLDDIAMVLSKGDLNIAELFSRLAGPLHARFFPRIRDELALTKHWVKTLLGQRSLLQHDPRLALSIRLRNPYIDPISVLQVDLLQRWRATDGEDEELLRALVACVNGVAQGVQNTG.

Catalysis depends on residues His151 and Lys570.

Belongs to the PEPCase type 1 family. Requires Mg(2+) as cofactor.

It catalyses the reaction oxaloacetate + phosphate = phosphoenolpyruvate + hydrogencarbonate. Its function is as follows. Forms oxaloacetate, a four-carbon dicarboxylic acid source for the tricarboxylic acid cycle. This chain is Phosphoenolpyruvate carboxylase, found in Xanthomonas campestris pv. campestris (strain ATCC 33913 / DSM 3586 / NCPPB 528 / LMG 568 / P 25).